The chain runs to 228 residues: Putative N-acetylmannosamine-6-phosphate 2-epimerase (228 aa).

This sequence belongs to the NanE family.

The catalysed reaction is an N-acyl-D-glucosamine 6-phosphate = an N-acyl-D-mannosamine 6-phosphate. It participates in amino-sugar metabolism; N-acetylneuraminate degradation; D-fructose 6-phosphate from N-acetylneuraminate: step 3/5. Its function is as follows. Converts N-acetylmannosamine-6-phosphate (ManNAc-6-P) to N-acetylglucosamine-6-phosphate (GlcNAc-6-P). This is Putative N-acetylmannosamine-6-phosphate 2-epimerase from Pasteurella multocida (strain Pm70).